We begin with the raw amino-acid sequence, 220 residues long: Cytidylate kinase (220 aa).

10 to 18 provides a ligand contact to ATP; sequence GPASSGKST.

Belongs to the cytidylate kinase family. Type 1 subfamily.

It localises to the cytoplasm. It catalyses the reaction CMP + ATP = CDP + ADP. It carries out the reaction dCMP + ATP = dCDP + ADP. The chain is Cytidylate kinase from Lactococcus lactis subsp. lactis (strain IL1403) (Streptococcus lactis).